The chain runs to 387 residues: Zn(2)-C6 fungal-type trascription factor aoiH (387 aa).

A DNA-binding region (zn(2)-C6 fungal-type) is located at residues 21–48; sequence CDFCALSKVKCDRGQPQCVRCIKSGIDC. Polar residues predominate over residues 68–87; sequence VRSTSATTQGTRRKQQTIAQ. The interval 68-94 is disordered; sequence VRSTSATTQGTRRKQQTIAQHSPRRRI.

The protein localises to the nucleus. In terms of biological role, transcription factor; part of the gene cluster that mediates the biosynthesis of a methylated derivative of known natural products orthosporin and diaporthin. Positively regultaes the expression of the non-reducing polyketide synthase aoiG and the O-methyltransferase aoiO. This Aspergillus oryzae (strain ATCC 42149 / RIB 40) (Yellow koji mold) protein is Zn(2)-C6 fungal-type trascription factor aoiH.